The following is a 25-amino-acid chain: WLGSALKIGAKLLPSVVGLFKKKKQ.

As to expression, expressed by the venom gland.

The protein resides in the secreted. It is found in the target cell membrane. Its function is as follows. Has a broad spectrum of activity against both Gram-positive and Gram-negative bacteria and S.cerevisiae. Has insecticidal and hemolytic activities. May act by disrupting the integrity of the bacterial cell membrane. The chain is M-poneritoxin-Ng1a from Neoponera goeldii (Ponerine ant).